The sequence spans 129 residues: Small ribosomal subunit protein uS9 (129 aa).

Belongs to the universal ribosomal protein uS9 family.

The sequence is that of Small ribosomal subunit protein uS9 from Helicobacter pylori (strain P12).